The sequence spans 528 residues: MEIFNFGQASDHRRLPDFGSGGFLQSLDTNPFLKNQYYNNSVEALELCKKLNKMGISCDMSIWTKPEEPFRVDPGDFGAKTLHESFGFDQNLTGASQIHDGFRNFSSVRVQNNNFHGVSPSPGLLGLQDSFNPNGFEEMMAFKDHKDFLLDHINEPIKRSPFLRGNDAFKGSLMFEGIRVSQILAAMEGSGASYPDEPKINGGLPLDLVSMVEIYGSVNLMARDQIGCRALQKLVEEGTVLDSKVIFLEIIDHVVELSMDPLGNYIVQKLLVVSDEEQRTMIVSVLTSKPRELIKICLNTNGTRVIQKMIKTVKTKQQIALVKSALEPGFLVLVNDSNGYHVLQSCLEFLVPNDNKFVVEAATEYCAQLATHQYGCYVLQCSLINTVGLQHERLVAEISRDSLRLSQDPFGNYVVQCLIDQQVSSVNLLLPFRTHCIELATQKFSSHVIEKCLRKYPESRAEIVRELLSYPNFEQLLQDPYANYVIQTALSVTKGAVRARLVEKVKRFGKLQSNPYCKKIFSKTILKK.

The region spanning 188-528 is the PUM-HD domain; it reads EGSGASYPDE…KIFSKTILKK (341 aa). 8 Pumilio repeats span residues 213–248, 249–284, 285–323, 325–360, 361–396, 397–433, 434–465, and 466–503; these read EIYGSVNLMARDQIGCRALQKLVEEGTVLDSKVIFL, EIIDHVVELSMDPLGNYIVQKLLVVSDEEQRTMIVS, VLTSKPRELIKICLNTNGTRVIQKMIKTVKTKQQIALVK, ALEPGFLVLVNDSNGYHVLQSCLEFLVPNDNKFVVE, AATEYCAQLATHQYGCYVLQCSLINTVGLQHERLVA, EISRDSLRLSQDPFGNYVVQCLIDQQVSSVNLLLPFR, THCIELATQKFSSHVIEKCLRKYPESRAEIVR, and ELLSYPNFEQLLQDPYANYVIQTALSVTKGAVRARLVE.

It is found in the cytoplasm. Sequence-specific RNA-binding protein that regulates translation and mRNA stability by binding the 3'-UTR of target mRNAs. The polypeptide is Putative pumilio homolog 10 (APUM10) (Arabidopsis thaliana (Mouse-ear cress)).